A 62-amino-acid chain; its full sequence is Conotoxin Im5.1 (62 aa).

An N-terminal signal peptide occupies residues 1–19 (MYCLPVFIILLLLISSAPS). The propeptide occupies 20–48 (TPPQPRNKDRVHLISLLDNHKQILQRDWN). Trp-60 bears the Tryptophan amide mark.

Belongs to the conotoxin T superfamily. Contains 2 disulfide bonds that can be either 'C1-C3, C2-C4' or 'C1-C4, C2-C3', since these disulfide connectivities have been observed for conotoxins with cysteine framework V (for examples, see AC P0DQQ7 and AC P81755). Expressed by the venom duct.

The protein localises to the secreted. This chain is Conotoxin Im5.1, found in Conus imperialis (Imperial cone).